The chain runs to 1382 residues: DNA-directed RNA polymerase subunit beta (1382 aa).

This sequence belongs to the RNA polymerase beta chain family. The RNAP catalytic core consists of 2 alpha, 1 beta, 1 beta' and 1 omega subunit. When a sigma factor is associated with the core the holoenzyme is formed, which can initiate transcription.

It carries out the reaction RNA(n) + a ribonucleoside 5'-triphosphate = RNA(n+1) + diphosphate. In terms of biological role, DNA-dependent RNA polymerase catalyzes the transcription of DNA into RNA using the four ribonucleoside triphosphates as substrates. The chain is DNA-directed RNA polymerase subunit beta from Paracoccus denitrificans (strain Pd 1222).